A 319-amino-acid chain; its full sequence is MKTIAVLTSGGDAPGMNAAIRAVVRTGLDKGLKVMGIQRGYSGLINGEIFEMHRYSVADIIHRGGTILRTARCEEFKTEAGRKKGVNILKAFGIDGVVVIGGDGSFQGAQLLSKLGVKTIGIPGTIDNDLAYTDYTIGFDTATNTVLDAINKLRDTSSSHERVSIVEVMGRGCGDLALFAGIGGGAESVIVPEKEFNEDELCKTILEGKLRGKLHNLIILAEGVGGGEALTKKVQETTGIQTRLTTLGHLQRGGSPSAFDRILASRLGVKAVELLLEGKSSRVVGLRNNKVVDDDIDEALSMKSKFDDELYDIAKILSY.

Gly11 is a binding site for ATP. 21-25 (RAVVR) is an ADP binding site. ATP contacts are provided by residues 72-73 (RC) and 102-105 (GDGS). Mg(2+) is bound at residue Asp103. Residue 125–127 (TID) participates in substrate binding. Catalysis depends on Asp127, which acts as the Proton acceptor. Arg154 contacts ADP. Substrate-binding positions include Arg162 and 169–171 (MGR). ADP contacts are provided by residues 185–187 (GAE), Arg211, and 213–215 (KLH). Residues Glu222, Arg243, and 249–252 (HLQR) contribute to the substrate site.

It belongs to the phosphofructokinase type A (PFKA) family. ATP-dependent PFK group I subfamily. Prokaryotic clade 'B1' sub-subfamily. As to quaternary structure, homotetramer. It depends on Mg(2+) as a cofactor.

It is found in the cytoplasm. It carries out the reaction beta-D-fructose 6-phosphate + ATP = beta-D-fructose 1,6-bisphosphate + ADP + H(+). It participates in carbohydrate degradation; glycolysis; D-glyceraldehyde 3-phosphate and glycerone phosphate from D-glucose: step 3/4. Allosterically activated by ADP and other diphosphonucleosides, and allosterically inhibited by phosphoenolpyruvate. Its function is as follows. Catalyzes the phosphorylation of D-fructose 6-phosphate to fructose 1,6-bisphosphate by ATP, the first committing step of glycolysis. The chain is ATP-dependent 6-phosphofructokinase from Clostridium novyi (strain NT).